We begin with the raw amino-acid sequence, 914 residues long: Valine--tRNA ligase (914 aa).

Positions P45–H55 match the 'HIGH' region motif. Residues K538 to S542 carry the 'KMSKS' region motif. K541 contacts ATP. Positions L847–S914 form a coiled coil.

It belongs to the class-I aminoacyl-tRNA synthetase family. ValS type 1 subfamily. Monomer.

It is found in the cytoplasm. The enzyme catalyses tRNA(Val) + L-valine + ATP = L-valyl-tRNA(Val) + AMP + diphosphate. Catalyzes the attachment of valine to tRNA(Val). As ValRS can inadvertently accommodate and process structurally similar amino acids such as threonine, to avoid such errors, it has a 'posttransfer' editing activity that hydrolyzes mischarged Thr-tRNA(Val) in a tRNA-dependent manner. This is Valine--tRNA ligase from Parasynechococcus marenigrum (strain WH8102).